The sequence spans 130 residues: Histone H2A type 2-A (130 aa).

Positions 1 to 22 are disordered; it reads MSGRGKQGGKARAKAKSRSSRA. At Ser-2 the chain carries N-acetylserine. Position 2 is a phosphoserine; by RPS6KA5 (Ser-2). Residue Arg-4 is modified to Citrulline; alternate. Residue Arg-4 is modified to Symmetric dimethylarginine; by PRMT5; alternate. N6-(2-hydroxyisobutyryl)lysine; alternate is present on residues Lys-6 and Lys-10. At Lys-6 the chain carries N6-(beta-hydroxybutyryl)lysine; alternate. Lys-6 is modified (N6-acetyllysine; alternate). Basic residues predominate over residues 7-19; that stretch reads QGGKARAKAKSRS. At Lys-10 the chain carries N6-lactoyllysine; alternate. Lys-10 carries the post-translational modification N6-succinyllysine; alternate. Glycyl lysine isopeptide (Lys-Gly) (interchain with G-Cter in ubiquitin) cross-links involve residues Lys-14 and Lys-16. Lys-37 carries the post-translational modification N6-(2-hydroxyisobutyryl)lysine; alternate. Lys-37 carries the N6-(beta-hydroxybutyryl)lysine; alternate modification. Lys-37 carries the post-translational modification N6-crotonyllysine; alternate. 2 positions are modified to N6-(2-hydroxyisobutyryl)lysine: Lys-75 and Lys-76. At Lys-96 the chain carries N6-(2-hydroxyisobutyryl)lysine; alternate. At Lys-96 the chain carries N6-succinyllysine; alternate. Lys-96 is modified (N6-glutaryllysine; alternate). Lys-100 carries the N6-glutaryllysine modification. The residue at position 105 (Gln-105) is an N5-methylglutamine. Lys-119 is subject to N6-(2-hydroxyisobutyryl)lysine; alternate. An N6-crotonyllysine; alternate mark is found at Lys-119 and Lys-120. Residues Lys-119 and Lys-120 each carry the N6-glutaryllysine; alternate modification. Lys-120 is subject to N6-(beta-hydroxybutyryl)lysine; alternate. Lys-120 participates in a covalent cross-link: Glycyl lysine isopeptide (Lys-Gly) (interchain with G-Cter in ubiquitin); alternate. Thr-121 carries the phosphothreonine; by DCAF1 modification. Residue Lys-126 is modified to N6-(beta-hydroxybutyryl)lysine; alternate. Lys-126 carries the post-translational modification N6-crotonyllysine; alternate. N6-glutaryllysine; alternate is present on Lys-126.

This sequence belongs to the histone H2A family. The nucleosome is a histone octamer containing two molecules each of H2A, H2B, H3 and H4 assembled in one H3-H4 heterotetramer and two H2A-H2B heterodimers. The octamer wraps approximately 147 bp of DNA. Deiminated on Arg-4 in granulocytes upon calcium entry. In terms of processing, monoubiquitination of Lys-120 (H2AK119Ub) by RING1, TRIM37 and RNF2/RING2 complex gives a specific tag for epigenetic transcriptional repression and participates in X chromosome inactivation of female mammals. It is involved in the initiation of both imprinted and random X inactivation. Ubiquitinated H2A is enriched in inactive X chromosome chromatin. Ubiquitination of H2A functions downstream of methylation of 'Lys-27' of histone H3 (H3K27me). H2AK119Ub by RNF2/RING2 can also be induced by ultraviolet and may be involved in DNA repair. Following DNA double-strand breaks (DSBs), it is ubiquitinated through 'Lys-63' linkage of ubiquitin moieties by the E2 ligase UBE2N and the E3 ligases RNF8 and RNF168, leading to the recruitment of repair proteins to sites of DNA damage. Ubiquitination at Lys-14 and Lys-16 (H2AK13Ub and H2AK15Ub, respectively) in response to DNA damage is initiated by RNF168 that mediates monoubiquitination at these 2 sites, and 'Lys-63'-linked ubiquitin are then conjugated to monoubiquitin; RNF8 is able to extend 'Lys-63'-linked ubiquitin chains in vitro. H2AK119Ub and ionizing radiation-induced 'Lys-63'-linked ubiquitination (H2AK13Ub and H2AK15Ub) are distinct events. Post-translationally, phosphorylation on Ser-2 (H2AS1ph) is enhanced during mitosis. Phosphorylation on Ser-2 by RPS6KA5/MSK1 directly represses transcription. Acetylation of H3 inhibits Ser-2 phosphorylation by RPS6KA5/MSK1. Phosphorylation at Thr-121 (H2AT120ph) by DCAF1 is present in the regulatory region of many tumor suppresor genes and down-regulates their transcription. Symmetric dimethylation on Arg-4 by the PRDM1/PRMT5 complex may play a crucial role in the germ-cell lineage. In terms of processing, glutamine methylation at Gln-105 (H2AQ104me) by FBL is specifically dedicated to polymerase I. It is present at 35S ribosomal DNA locus and impairs binding of the FACT complex. Post-translationally, crotonylation (Kcr) is specifically present in male germ cells and marks testis-specific genes in post-meiotic cells, including X-linked genes that escape sex chromosome inactivation in haploid cells. Crotonylation marks active promoters and enhancers and confers resistance to transcriptional repressors. It is also associated with post-meiotically activated genes on autosomes. Hydroxybutyrylation of histones is induced by starvation. In terms of processing, lactylated in macrophages by EP300/P300 by using lactoyl-CoA directly derived from endogenous or exogenous lactate, leading to stimulates gene transcription.

It localises to the nucleus. Its subcellular location is the chromosome. Functionally, core component of nucleosome. Nucleosomes wrap and compact DNA into chromatin, limiting DNA accessibility to the cellular machineries which require DNA as a template. Histones thereby play a central role in transcription regulation, DNA repair, DNA replication and chromosomal stability. DNA accessibility is regulated via a complex set of post-translational modifications of histones, also called histone code, and nucleosome remodeling. The protein is Histone H2A type 2-A (Hist2h2aa1) of Mus musculus (Mouse).